The primary structure comprises 382 residues: D-galactonate dehydratase (382 aa).

Asp-183 is a Mg(2+) binding site. The active-site Proton donor is the His-185. Glu-209 and Glu-235 together coordinate Mg(2+). His-285 functions as the Proton acceptor in the catalytic mechanism.

This sequence belongs to the mandelate racemase/muconate lactonizing enzyme family. GalD subfamily. It depends on Mg(2+) as a cofactor.

It catalyses the reaction D-galactonate = 2-dehydro-3-deoxy-D-galactonate + H2O. It functions in the pathway carbohydrate acid metabolism; D-galactonate degradation; D-glyceraldehyde 3-phosphate and pyruvate from D-galactonate: step 1/3. Its function is as follows. Catalyzes the dehydration of D-galactonate to 2-keto-3-deoxy-D-galactonate. The polypeptide is D-galactonate dehydratase (Salmonella choleraesuis (strain SC-B67)).